Here is a 94-residue protein sequence, read N- to C-terminus: DNA-directed RNA polymerase subunit omega (94 aa).

Belongs to the RNA polymerase subunit omega family. As to quaternary structure, the RNAP catalytic core consists of 2 alpha, 1 beta, 1 beta' and 1 omega subunit. When a sigma factor is associated with the core the holoenzyme is formed, which can initiate transcription.

It carries out the reaction RNA(n) + a ribonucleoside 5'-triphosphate = RNA(n+1) + diphosphate. In terms of biological role, promotes RNA polymerase assembly. Latches the N- and C-terminal regions of the beta' subunit thereby facilitating its interaction with the beta and alpha subunits. This chain is DNA-directed RNA polymerase subunit omega, found in Frankia alni (strain DSM 45986 / CECT 9034 / ACN14a).